Consider the following 154-residue polypeptide: Endoribonuclease YbeY (154 aa).

His-113, His-117, and His-123 together coordinate Zn(2+).

Belongs to the endoribonuclease YbeY family. It depends on Zn(2+) as a cofactor.

Its subcellular location is the cytoplasm. In terms of biological role, single strand-specific metallo-endoribonuclease involved in late-stage 70S ribosome quality control and in maturation of the 3' terminus of the 16S rRNA. This Verminephrobacter eiseniae (strain EF01-2) protein is Endoribonuclease YbeY.